The chain runs to 2351 residues: Protein FAM186A (2351 aa).

The stretch at E296–L340 forms a coiled coil. Disordered regions lie at residues E412 to R460, E470 to K489, E505 to G538, Q593 to S667, S809 to S838, L868 to E976, G1805 to P1837, and F1888 to G1907. The segment covering D433–F446 has biased composition (basic and acidic residues). Residues S472–K484 are compositionally biased toward polar residues. Over residues M506 to A520 the composition is skewed to basic and acidic residues. A compositionally biased stretch (polar residues) spans L527 to G538. The span at G603 to I612 shows a compositional bias: basic residues. 2 stretches are compositionally biased toward basic and acidic residues: residues S619–K632 and Q812–Q823. Residues Q812–N860 adopt a coiled-coil conformation. The span at E824 to S838 shows a compositional bias: polar residues. 3 stretches are compositionally biased toward basic and acidic residues: residues A901–Q912, L939–H955, and K964–E976. Residues P1816–G1835 show a composition bias toward pro residues. Polar residues predominate over residues A1894 to G1907.

Belongs to the FAM186 family.

The protein is Protein FAM186A (FAM186A) of Homo sapiens (Human).